An 872-amino-acid chain; its full sequence is MSNVTPMMQQYLKIKSEYQDCLLFFRLGDFYEMFYEDAKEASRVLEITLTKRDAKKENPIPMCGVPYHSADSYIDTLVNNGYKVAICEQMEDPKQTKGMVRREVVRIVTPGTVMEQGGVDDKQNNYILSFVMNQPEIALSYCDVSTGELKVTHFNDEATLLNEITTINPNEVVINDNISDHLKRQINMVTETITVRETLSSEIYSVNQTEHKLMFQATQLLLDYIHHTQKRDLSHIEDVVQYAAIDYMKMDFYAKRNLELTESIRLKSKKGTLLWLMDETKTPMGARRLKQWIDRPLISKEQIEARLDIVDEFSAHFIERDTLRTYLNQVYDIERLVGRVSYGNVNARDLIQLKHSISEIPNIKALLNSMNQDTLVQVNQLEPLDDLLDILEQSLVEEPPISVKDGGLFKVGFNMQLDEYLEASKNGKTWLAELQAKERQRTGIKSLKISFNKVFGYFIEITRANLQNFEPSEFGYMRKQTLSNAERFITDELKEKEDIILGAEDKAIELEYQLFVQLREEVKKYTERLQQQAKIISELDCLQSFAEIAQKYNYTRPSFSENKTLELVESRHPVVERVMDYNDYVPNNCRLDNETFIYLITGPNMSGKSTYMRQVAIISIMAQMGAYVPCKEAVLPIFDQIFTRIGAADDLVSGKSTFMVEMLEAQKALTYATEDSLIIFDEIGRGTSTYDGLALAQAMIEYVAETSHAKTLFSTHYHELTTLDQALPSLKNVHVAANEYKGELIFLHKVKDGAVDDSYGIQVAKLADLPEKVISRAQVILSEFEASADKKSSISNLKMVENEPEINQENSNLSVEETTDTLSQKDFEQASFDLFENDQESEIELQIKNLNLSNMTPIEALVKLSELQNQLK.

ATP is bound at residue 602–609 (GPNMSGKS).

This sequence belongs to the DNA mismatch repair MutS family.

This protein is involved in the repair of mismatches in DNA. It is possible that it carries out the mismatch recognition step. This protein has a weak ATPase activity. This Staphylococcus aureus (strain bovine RF122 / ET3-1) protein is DNA mismatch repair protein MutS.